A 510-amino-acid polypeptide reads, in one-letter code: Histidine ammonia-lyase (510 aa).

Positions 143-145 (ASG) form a cross-link, 5-imidazolinone (Ala-Gly). Position 144 is a 2,3-didehydroalanine (Ser) (serine 144).

Belongs to the PAL/histidase family. Contains an active site 4-methylidene-imidazol-5-one (MIO), which is formed autocatalytically by cyclization and dehydration of residues Ala-Ser-Gly.

The protein localises to the cytoplasm. It carries out the reaction L-histidine = trans-urocanate + NH4(+). The protein operates within amino-acid degradation; L-histidine degradation into L-glutamate; N-formimidoyl-L-glutamate from L-histidine: step 1/3. This is Histidine ammonia-lyase from Yersinia pestis.